The sequence spans 265 residues: Mycothiol acetyltransferase (265 aa).

2 N-acetyltransferase domains span residues 1–110 (MDDL…PPLP) and 118–265 (VSVR…YVRG). D3 is a 1D-myo-inositol 2-(L-cysteinylamino)-2-deoxy-alpha-D-glucopyranoside binding site. An acetyl-CoA-binding site is contributed by 44-46 (VQV). E145, R185, and E198 together coordinate 1D-myo-inositol 2-(L-cysteinylamino)-2-deoxy-alpha-D-glucopyranoside. Residues 202 to 204 (LGV) and 209 to 215 (HCKGLGK) each bind acetyl-CoA. Y236 contributes to the 1D-myo-inositol 2-(L-cysteinylamino)-2-deoxy-alpha-D-glucopyranoside binding site.

It belongs to the acetyltransferase family. MshD subfamily. In terms of assembly, monomer.

It catalyses the reaction 1D-myo-inositol 2-(L-cysteinylamino)-2-deoxy-alpha-D-glucopyranoside + acetyl-CoA = mycothiol + CoA + H(+). In terms of biological role, catalyzes the transfer of acetyl from acetyl-CoA to desacetylmycothiol (Cys-GlcN-Ins) to form mycothiol. The sequence is that of Mycothiol acetyltransferase from Segniliparus rotundus (strain ATCC BAA-972 / CDC 1076 / CIP 108378 / DSM 44985 / JCM 13578).